A 495-amino-acid polypeptide reads, in one-letter code: ATP synthase subunit alpha, chloroplastic (495 aa).

Residue 170 to 177 (GDRQTGKT) coordinates ATP.

It belongs to the ATPase alpha/beta chains family. F-type ATPases have 2 components, CF(1) - the catalytic core - and CF(0) - the membrane proton channel. CF(1) has five subunits: alpha(3), beta(3), gamma(1), delta(1), epsilon(1). CF(0) has four main subunits: a, b, b' and c.

The protein localises to the plastid. It is found in the chloroplast thylakoid membrane. It catalyses the reaction ATP + H2O + 4 H(+)(in) = ADP + phosphate + 5 H(+)(out). Produces ATP from ADP in the presence of a proton gradient across the membrane. The alpha chain is a regulatory subunit. The chain is ATP synthase subunit alpha, chloroplastic from Cyanidioschyzon merolae (strain NIES-3377 / 10D) (Unicellular red alga).